Here is a 256-residue protein sequence, read N- to C-terminus: V-type proton ATPase subunit D (256 aa).

Residues 211 to 230 (QNETAKLDAEMKLKRDRAEQ) show a composition bias toward basic and acidic residues. Positions 211–256 (QNETAKLDAEMKLKRDRAEQDASEVAADEEPQGETLVADQEDDVIF) are disordered.

This sequence belongs to the V-ATPase D subunit family. In terms of assembly, V-ATPase is a heteromultimeric enzyme composed of a peripheral catalytic V1 complex (components A to H) attached to an integral membrane V0 proton pore complex (components: a, c, c', c'', d, e, f and VOA1). Interacts with RAV1 and RAV2 components of the RAVE complex, which are essential for the stability and assembly of V-ATPase.

It is found in the vacuole membrane. Its function is as follows. Subunit of the V1 complex of vacuolar(H+)-ATPase (V-ATPase), a multisubunit enzyme composed of a peripheral complex (V1) that hydrolyzes ATP and a membrane integral complex (V0) that translocates protons. V-ATPase is responsible for acidifying and maintaining the pH of intracellular compartments. The protein is V-type proton ATPase subunit D of Saccharomyces cerevisiae (strain ATCC 204508 / S288c) (Baker's yeast).